A 252-amino-acid chain; its full sequence is Imidazole glycerol phosphate synthase subunit HisF (252 aa).

Residues aspartate 11 and aspartate 130 contribute to the active site.

Belongs to the HisA/HisF family. In terms of assembly, heterodimer of HisH and HisF.

Its subcellular location is the cytoplasm. The enzyme catalyses 5-[(5-phospho-1-deoxy-D-ribulos-1-ylimino)methylamino]-1-(5-phospho-beta-D-ribosyl)imidazole-4-carboxamide + L-glutamine = D-erythro-1-(imidazol-4-yl)glycerol 3-phosphate + 5-amino-1-(5-phospho-beta-D-ribosyl)imidazole-4-carboxamide + L-glutamate + H(+). It participates in amino-acid biosynthesis; L-histidine biosynthesis; L-histidine from 5-phospho-alpha-D-ribose 1-diphosphate: step 5/9. In terms of biological role, IGPS catalyzes the conversion of PRFAR and glutamine to IGP, AICAR and glutamate. The HisF subunit catalyzes the cyclization activity that produces IGP and AICAR from PRFAR using the ammonia provided by the HisH subunit. The sequence is that of Imidazole glycerol phosphate synthase subunit HisF from Anoxybacillus flavithermus (strain DSM 21510 / WK1).